A 459-amino-acid polypeptide reads, in one-letter code: MALPLVAVVGRPNVGKSSLVNRLAGVRSAIVHDEPGITRDRLYQEVEWNGRRLRVVDTGGLVFGDDSEFLPHIRQQAMAAMAEAHAVIFVVDGREGLTPADKELADWLRRQPLPVVVAVNKCESGQLGLAQAAAFWELGLGEPIPCSAVHGNGVAELLEAVLPHLPEVAQEAADEPDPIAVAIVGRPNVGKSSLLNRLVGSERAIVSPIAGTTRDAVDTLVEWEGQSYRLIDTAGIRRKSRVEYGVEFFSINRAFKAIQRSDVVLLVIDALEGVTEQDQRLAGRIEEEGRACIIVVNKWDAVENKDTHTINEYTREIRERLYFIDWAPLLFVSALTGQRTHKIFAEVNTAVAAHRKRIATSVVNEVLQDALAWQSPPANRQGKQGKIYYGTQVAERPPTFLLFVNDPDLFKENYRRYLEKHFRQNLDFTGTPIRFRWRSKSERLVGRAVQKLEGSLASR.

2 EngA-type G domains span residues 4–169 (PLVA…PEVA) and 179–355 (IAVA…AAHR). Residues 10–17 (GRPNVGKS), 57–61 (DTGGL), 120–123 (NKCE), 185–192 (GRPNVGKS), 232–236 (DTAGI), and 297–300 (NKWD) each bind GTP. One can recognise a KH-like domain in the interval 356 to 441 (KRIATSVVNE…PIRFRWRSKS (86 aa)).

Belongs to the TRAFAC class TrmE-Era-EngA-EngB-Septin-like GTPase superfamily. EngA (Der) GTPase family. As to quaternary structure, associates with the 50S ribosomal subunit.

Functionally, GTPase that plays an essential role in the late steps of ribosome biogenesis. In Synechococcus sp. (strain JA-3-3Ab) (Cyanobacteria bacterium Yellowstone A-Prime), this protein is GTPase Der.